The chain runs to 1073 residues: Carbamoyl phosphate synthase large chain (1073 aa).

The tract at residues 1 to 399 (MPKREDIKKV…SLLKAFKSLD (399 aa)) is carboxyphosphate synthetic domain. 12 residues coordinate ATP: R129, R169, G175, G176, E208, V210, E215, G241, V242, H243, Q284, and E296. In terms of domain architecture, ATP-grasp 1 spans 133-325 (KETMLSIGEK…IARVTAKIAI (193 aa)). The Mg(2+) site is built by Q284, E296, and N298. 3 residues coordinate Mn(2+): Q284, E296, and N298. The interval 400–540 (IDNQLGIKRW…YSTYEDTCET (141 aa)) is oligomerization domain. Positions 541–931 (NSTDKKKILI…YKAELAADNL (391 aa)) are carbamoyl phosphate synthetic domain. The ATP-grasp 2 domain occupies 672-863 (YLLMQELGIP…LAKIAAKVIA (192 aa)). ATP contacts are provided by R708, D747, L749, E754, G779, V780, H781, S782, Q822, and E834. Mg(2+) contacts are provided by Q822, E834, and N836. The Mn(2+) site is built by Q822, E834, and N836. Residues 930–1071 (NLLPLTGKVF…NEYHKEMEQK (142 aa)) form the MGS-like domain. The allosteric domain stretch occupies residues 932–1073 (LPLTGKVFLS…YHKEMEQKEE (142 aa)).

It belongs to the CarB family. Composed of two chains; the small (or glutamine) chain promotes the hydrolysis of glutamine to ammonia, which is used by the large (or ammonia) chain to synthesize carbamoyl phosphate. Tetramer of heterodimers (alpha,beta)4. Requires Mg(2+) as cofactor. It depends on Mn(2+) as a cofactor.

It carries out the reaction hydrogencarbonate + L-glutamine + 2 ATP + H2O = carbamoyl phosphate + L-glutamate + 2 ADP + phosphate + 2 H(+). The catalysed reaction is hydrogencarbonate + NH4(+) + 2 ATP = carbamoyl phosphate + 2 ADP + phosphate + 2 H(+). It functions in the pathway amino-acid biosynthesis; L-arginine biosynthesis; carbamoyl phosphate from bicarbonate: step 1/1. The protein operates within pyrimidine metabolism; UMP biosynthesis via de novo pathway; (S)-dihydroorotate from bicarbonate: step 1/3. Functionally, large subunit of the glutamine-dependent carbamoyl phosphate synthetase (CPSase). CPSase catalyzes the formation of carbamoyl phosphate from the ammonia moiety of glutamine, carbonate, and phosphate donated by ATP, constituting the first step of 2 biosynthetic pathways, one leading to arginine and/or urea and the other to pyrimidine nucleotides. The large subunit (synthetase) binds the substrates ammonia (free or transferred from glutamine from the small subunit), hydrogencarbonate and ATP and carries out an ATP-coupled ligase reaction, activating hydrogencarbonate by forming carboxy phosphate which reacts with ammonia to form carbamoyl phosphate. The protein is Carbamoyl phosphate synthase large chain of Methanosarcina mazei (strain ATCC BAA-159 / DSM 3647 / Goe1 / Go1 / JCM 11833 / OCM 88) (Methanosarcina frisia).